The following is a 213-amino-acid chain: Thymidylate kinase (213 aa).

10 to 17 contacts ATP; that stretch reads GLEGAGKT.

It belongs to the thymidylate kinase family.

It carries out the reaction dTMP + ATP = dTDP + ADP. In terms of biological role, phosphorylation of dTMP to form dTDP in both de novo and salvage pathways of dTTP synthesis. In Salmonella arizonae (strain ATCC BAA-731 / CDC346-86 / RSK2980), this protein is Thymidylate kinase.